A 647-amino-acid chain; its full sequence is tRNA 5-methylaminomethyl-2-thiouridine biosynthesis bifunctional protein MnmC (647 aa).

The tract at residues 1 to 227 (MLTWKNNLTP…KREMLIGSYS (227 aa)) is tRNA (mnm(5)s(2)U34)-methyltransferase. Positions 256 to 647 (VGAGIAGTTL…ARFLYRKVRK (392 aa)) are FAD-dependent cmnm(5)s(2)U34 oxidoreductase.

This sequence in the N-terminal section; belongs to the methyltransferase superfamily. tRNA (mnm(5)s(2)U34)-methyltransferase family. The protein in the C-terminal section; belongs to the DAO family. The cofactor is FAD.

Its subcellular location is the cytoplasm. It catalyses the reaction 5-aminomethyl-2-thiouridine(34) in tRNA + S-adenosyl-L-methionine = 5-methylaminomethyl-2-thiouridine(34) in tRNA + S-adenosyl-L-homocysteine + H(+). Its function is as follows. Catalyzes the last two steps in the biosynthesis of 5-methylaminomethyl-2-thiouridine (mnm(5)s(2)U) at the wobble position (U34) in tRNA. Catalyzes the FAD-dependent demodification of cmnm(5)s(2)U34 to nm(5)s(2)U34, followed by the transfer of a methyl group from S-adenosyl-L-methionine to nm(5)s(2)U34, to form mnm(5)s(2)U34. This is tRNA 5-methylaminomethyl-2-thiouridine biosynthesis bifunctional protein MnmC from Leptospira interrogans serogroup Icterohaemorrhagiae serovar copenhageni (strain Fiocruz L1-130).